The following is a 169-amino-acid chain: Peptide deformylase (169 aa).

The Fe cation site is built by Cys-91 and His-133. Residue Glu-134 is part of the active site. His-137 serves as a coordination point for Fe cation.

It belongs to the polypeptide deformylase family. Requires Fe(2+) as cofactor.

The catalysed reaction is N-terminal N-formyl-L-methionyl-[peptide] + H2O = N-terminal L-methionyl-[peptide] + formate. Functionally, removes the formyl group from the N-terminal Met of newly synthesized proteins. Requires at least a dipeptide for an efficient rate of reaction. N-terminal L-methionine is a prerequisite for activity but the enzyme has broad specificity at other positions. In Citrobacter koseri (strain ATCC BAA-895 / CDC 4225-83 / SGSC4696), this protein is Peptide deformylase.